Reading from the N-terminus, the 522-residue chain is Glutamyl-tRNA(Gln) amidotransferase subunit A (522 aa).

Catalysis depends on charge relay system residues Lys-88 and Ser-163. Residue Ser-187 is the Acyl-ester intermediate of the active site.

This sequence belongs to the amidase family. GatA subfamily. In terms of assembly, heterotrimer of A, B and C subunits.

It carries out the reaction L-glutamyl-tRNA(Gln) + L-glutamine + ATP + H2O = L-glutaminyl-tRNA(Gln) + L-glutamate + ADP + phosphate + H(+). Functionally, allows the formation of correctly charged Gln-tRNA(Gln) through the transamidation of misacylated Glu-tRNA(Gln) in organisms which lack glutaminyl-tRNA synthetase. The reaction takes place in the presence of glutamine and ATP through an activated gamma-phospho-Glu-tRNA(Gln). In Paenarthrobacter aurescens (strain TC1), this protein is Glutamyl-tRNA(Gln) amidotransferase subunit A.